We begin with the raw amino-acid sequence, 114 residues long: DNA polymerase epsilon subunit C (114 aa).

Positions P91–E114 are disordered.

Heterotetramer. Consists of four subunits: POL2, DPB2, DPB3 and DPB4.

It is found in the nucleus. Functionally, as accessory component of the DNA polymerase epsilon (DNA polymerase II) participates in chromosomal DNA replication. The chain is DNA polymerase epsilon subunit C (DPB3) from Yarrowia lipolytica (strain CLIB 122 / E 150) (Yeast).